We begin with the raw amino-acid sequence, 453 residues long: Bifunctional protein GlmU (453 aa).

A pyrophosphorylase region spans residues 1–228; it reads MPHWAAVIMA…VHEALGINSR (228 aa). Residues Lys-23, Gln-73, 78–79, 100–102, Gly-139, Glu-153, Asn-168, and Asn-226 each bind UDP-N-acetyl-alpha-D-glucosamine; these read GT and SGD. Asp-102 serves as a coordination point for Mg(2+). Asn-226 contributes to the Mg(2+) binding site. The interval 229–249 is linker; sequence AQLAAAEDVARQRILSYWMEE. The interval 250–453 is N-acetyltransferase; sequence GVTIIDPRST…IENWVRNKKK (204 aa). Residues Arg-331 and Lys-349 each coordinate UDP-N-acetyl-alpha-D-glucosamine. The active-site Proton acceptor is His-361. The UDP-N-acetyl-alpha-D-glucosamine site is built by Tyr-364 and Asn-375. Acetyl-CoA contacts are provided by residues Ala-378, 384-385, Ser-403, Ala-421, and Arg-438; that span reads NY.

In the N-terminal section; belongs to the N-acetylglucosamine-1-phosphate uridyltransferase family. The protein in the C-terminal section; belongs to the transferase hexapeptide repeat family. In terms of assembly, homotrimer. Requires Mg(2+) as cofactor.

The protein localises to the cytoplasm. The enzyme catalyses alpha-D-glucosamine 1-phosphate + acetyl-CoA = N-acetyl-alpha-D-glucosamine 1-phosphate + CoA + H(+). The catalysed reaction is N-acetyl-alpha-D-glucosamine 1-phosphate + UTP + H(+) = UDP-N-acetyl-alpha-D-glucosamine + diphosphate. It participates in nucleotide-sugar biosynthesis; UDP-N-acetyl-alpha-D-glucosamine biosynthesis; N-acetyl-alpha-D-glucosamine 1-phosphate from alpha-D-glucosamine 6-phosphate (route II): step 2/2. The protein operates within nucleotide-sugar biosynthesis; UDP-N-acetyl-alpha-D-glucosamine biosynthesis; UDP-N-acetyl-alpha-D-glucosamine from N-acetyl-alpha-D-glucosamine 1-phosphate: step 1/1. It functions in the pathway bacterial outer membrane biogenesis; LPS lipid A biosynthesis. Catalyzes the last two sequential reactions in the de novo biosynthetic pathway for UDP-N-acetylglucosamine (UDP-GlcNAc). The C-terminal domain catalyzes the transfer of acetyl group from acetyl coenzyme A to glucosamine-1-phosphate (GlcN-1-P) to produce N-acetylglucosamine-1-phosphate (GlcNAc-1-P), which is converted into UDP-GlcNAc by the transfer of uridine 5-monophosphate (from uridine 5-triphosphate), a reaction catalyzed by the N-terminal domain. The sequence is that of Bifunctional protein GlmU from Desulfitobacterium hafniense (strain DSM 10664 / DCB-2).